We begin with the raw amino-acid sequence, 445 residues long: GRAM domain-containing protein 2B (445 aa).

At Met1 the chain carries N-acetylmethionine. The segment at 1–118 is disordered; that stretch reads MVKKRLSSSD…ERKKSSSSSQ (118 aa). Polar residues-rich tracts occupy residues 18-44 and 56-68; these read PSNS…SSEA and KSPT…SSVE. Low complexity predominate over residues 82-93; sequence SKSSFDGSSLLS. Positions 94–112 are enriched in basic and acidic residues; that stretch reads DKNDCKTESKTDSKTERKK. The region spanning 123–190 is the GRAM domain; that stretch reads MHFHKLFLDV…FSVTLIKKTK (68 aa). Over residues 233–246 the composition is skewed to polar residues; the sequence is TSVGNSPNPSSAEN. The segment at 233–252 is disordered; the sequence is TSVGNSPNPSSAENSFRADR. 3 positions are modified to phosphoserine: Ser238, Ser255, and Ser265. The disordered stretch occupies residues 277–331; sequence DLEGYSSSGSQTPESENSRDFHVTESQTVLNVTKGETKPPRTDAHGSRAPDGKAK. The span at 281–291 shows a compositional bias: polar residues; the sequence is YSSSGSQTPES. A compositionally biased stretch (basic and acidic residues) spans 311–330; the sequence is GETKPPRTDAHGSRAPDGKA.

The chain is GRAM domain-containing protein 2B (Gramd2b) from Mus musculus (Mouse).